A 771-amino-acid chain; its full sequence is ATP-dependent RNA helicase DRS1 (771 aa).

Disordered stretches follow at residues 1–96 (MAKK…LDGF), 109–128 (VESNGDVTKKPISKDVDLDG), and 134–233 (GGLA…KPVE). Positions 28-46 (SDSEGENEIPDLEEESEVD) are enriched in acidic residues. Residues 33–84 (ENEIPDLEEESEVDQELKEEEKPKPKPKPKSKKNKKNKDINNDQEKTEEQEE) adopt a coiled-coil conformation. Residues 47–56 (QELKEEEKPK) are compositionally biased toward basic and acidic residues. The segment covering 57-68 (PKPKPKSKKNKK) has biased composition (basic residues). The segment covering 69–79 (NKDINNDQEKT) has biased composition (basic and acidic residues). Polar residues predominate over residues 85–96 (INPNFTFSLDGF). Composition is skewed to acidic residues over residues 149 to 182 (KNDEVESEEVEEVEEDDEDEENEQEGDDDDDELA) and 197 to 233 (ADDDQDEQEPEDDDEGVEADMDEEYPGSDQEDEKPVE). The short motif at 258–286 (TTFQSLQLSRPVLKGLSQLGYTKPSPIQS) is the Q motif element. One can recognise a Helicase ATP-binding domain in the interval 289-465 (IPIALLGKDI…QLSLQKPVRV (177 aa)). 302–309 (AVTGSGKT) contributes to the ATP binding site. A DEAD box motif is present at residues 412–415 (DEAD). Residues 476-643 (KLVQEFVRIR…RNSKQGKAVS (168 aa)) enclose the Helicase C-terminal domain. The span at 695–717 (EKEIQSRPRRTWFESEKDKKHQT) shows a compositional bias: basic and acidic residues. A disordered region spans residues 695–771 (EKEIQSRPRR…KPKSNGKNKK (77 aa)). Basic residues-rich tracts occupy residues 725–736 (KHGKKVNSHKRK) and 759–771 (VQKKPKSNGKNKK).

It belongs to the DEAD box helicase family. DDX27/DRS1 subfamily. As to quaternary structure, associates with pre-ribosomal particles.

The protein resides in the nucleus. Its subcellular location is the nucleolus. The catalysed reaction is ATP + H2O = ADP + phosphate + H(+). Its function is as follows. ATP-binding RNA helicase involved in ribosome assembly. This chain is ATP-dependent RNA helicase DRS1 (DRS1), found in Debaryomyces hansenii (strain ATCC 36239 / CBS 767 / BCRC 21394 / JCM 1990 / NBRC 0083 / IGC 2968) (Yeast).